Here is a 153-residue protein sequence, read N- to C-terminus: Alpha-amylase inhibitor 0.28 (153 aa).

Residues 1–30 (MWMKTVFWGLLVFMLVATTMAVEYGARSHN) form the signal peptide. 5 disulfide bridges follow: Cys-37–Cys-84, Cys-51–Cys-72, Cys-59–Cys-112, Cys-73–Cys-128, and Cys-86–Cys-143.

The protein belongs to the protease inhibitor I6 (cereal trypsin/alpha-amylase inhibitor) family. In terms of assembly, monomer. The disulfide bonds are essential for the inhibitor activity. Endosperm.

It is found in the secreted. Alpha-amylase inhibitor. This is Alpha-amylase inhibitor 0.28 (IMA1) from Triticum aestivum (Wheat).